The sequence spans 525 residues: Ent-kaurene oxidase (525 aa).

A helical transmembrane segment spans residues 31-51; that stretch reads VHWLIYVAFGAWLCSYVIHVL. Residue cysteine 466 coordinates heme.

This sequence belongs to the cytochrome P450 family. It depends on heme as a cofactor.

The protein localises to the membrane. It catalyses the reaction ent-kaur-16-ene + 3 reduced [NADPH--hemoprotein reductase] + 3 O2 = ent-kaur-16-en-19-oate + 3 oxidized [NADPH--hemoprotein reductase] + 4 H2O + 4 H(+). It participates in plant hormone biosynthesis; gibberellin biosynthesis. In terms of biological role, catalyzes three successive oxidations of the 4-methyl group of ent-kaurene giving kaurenoic acid, a key step in gibberellin (GA) biosynthesis. This chain is Ent-kaurene oxidase (CYP503A1), found in Gibberella intermedia (Bulb rot disease fungus).